We begin with the raw amino-acid sequence, 444 residues long: N-succinylarginine dihydrolase (444 aa).

Residues 19–28 (AGLSFGNVAS), asparagine 110, and 137–138 (HR) each bind substrate. Residue glutamate 174 is part of the active site. Residue arginine 214 participates in substrate binding. Histidine 250 is a catalytic residue. Residues aspartate 252 and asparagine 362 each contribute to the substrate site. Cysteine 368 functions as the Nucleophile in the catalytic mechanism.

The protein belongs to the succinylarginine dihydrolase family. In terms of assembly, homodimer.

The enzyme catalyses N(2)-succinyl-L-arginine + 2 H2O + 2 H(+) = N(2)-succinyl-L-ornithine + 2 NH4(+) + CO2. The protein operates within amino-acid degradation; L-arginine degradation via AST pathway; L-glutamate and succinate from L-arginine: step 2/5. Its function is as follows. Catalyzes the hydrolysis of N(2)-succinylarginine into N(2)-succinylornithine, ammonia and CO(2). The chain is N-succinylarginine dihydrolase from Shewanella frigidimarina (strain NCIMB 400).